The primary structure comprises 30 residues: Kalata-B5 (30 aa).

The cyclopeptide (Gly-Asn) cross-link spans 1 to 30 (GTPCGESCVYIPCISGVIGCSCTDKVCYLN). Disulfide bonds link Cys-4–Cys-20, Cys-8–Cys-22, and Cys-13–Cys-27.

This is a cyclic peptide.

Probably participates in a plant defense mechanism. This is Kalata-B5 from Oldenlandia affinis.